A 330-amino-acid chain; its full sequence is Tryptophan--tRNA ligase (330 aa).

Residues Q10–T12 and G18–N19 each bind ATP. Positions T11–N19 match the 'HIGH' region motif. D134 provides a ligand contact to L-tryptophan. Residues G146–D148, I186, and K195–S199 contribute to the ATP site. Positions K195–S199 match the 'KMSKS' region motif.

This sequence belongs to the class-I aminoacyl-tRNA synthetase family. Homodimer.

It localises to the cytoplasm. It catalyses the reaction tRNA(Trp) + L-tryptophan + ATP = L-tryptophyl-tRNA(Trp) + AMP + diphosphate + H(+). Functionally, catalyzes the attachment of tryptophan to tRNA(Trp). This Rickettsia typhi (strain ATCC VR-144 / Wilmington) protein is Tryptophan--tRNA ligase.